Reading from the N-terminus, the 366-residue chain is Lysophosphatidic acid receptor 1-A (366 aa).

The Extracellular portion of the chain corresponds to 1 to 52; sequence MASLSEFVSEPISMMSQTSAASESQCYYNETIAFFYNRSGKYLATEWNAVSK. Intrachain disulfides connect C26–C192 and C190–C197. N-linked (GlcNAc...) asparagine glycosylation is found at N29 and N37. Position 41 (K41) interacts with a 1-acyl-sn-glycero-3-phosphate. A helical transmembrane segment spans residues 53–77; sequence LVMGLGITVCIFIMLANLLVMVAIY. The Cytoplasmic segment spans residues 78 to 85; it reads VNRRFHFP. A helical transmembrane segment spans residues 86–109; it reads IYYLMANLAAADFFAGLAYFYLMF. Residues 110–123 lie on the Extracellular side of the membrane; that stretch reads NTGPNTRRLTVSTW. The chain crosses the membrane as a helical span at residues 124–146; the sequence is LLRQGLIDTSLTASVANLLAIAI. Residue 126–131 participates in a 1-acyl-sn-glycero-3-phosphate binding; sequence RQGLID. Residues 147–165 are Cytoplasmic-facing; it reads ERHITVFRMQLHTRMSNRR. Residues 166-186 form a helical membrane-spanning segment; the sequence is VVVVIVVIWTVAIVMGAIPSV. Residues 187–206 are Extracellular-facing; that stretch reads GWNCICDLEQCSNMAPLYSD. Residues 207-227 form a helical membrane-spanning segment; it reads SYLIFWTIFNLVTFVVMVVLY. W212 contributes to the a 1-acyl-sn-glycero-3-phosphate binding site. Topologically, residues 228–257 are cytoplasmic; the sequence is AHIFVYVRQKTMRMSRHSSGPRRNRDTMMS. Residues 258-282 form a helical membrane-spanning segment; the sequence is LLKTVVIVLGAFIVCWTPGLVLLLL. The Extracellular portion of the chain corresponds to 283–296; it reads DICCPQCNILAYEK. C286 and C289 are joined by a disulfide. Residues 297 to 317 traverse the membrane as a helical segment; it reads FFLLLAEFNSAMNPIIYSYRD. The Cytoplasmic portion of the chain corresponds to 318–366; it reads KEMSATFKQILCCQRTENVNGPTEGSDRSASSLNHTILAGVHSNDHSVV.

Belongs to the G-protein coupled receptor 1 family. Expressed at high levels in oocytes and at lower levels in brain and spinal cord. Below detection level in lung, heart, kidney, liver, muscle, stomach, and intestine.

It is found in the cell surface. The protein localises to the cell membrane. It localises to the endosome. In terms of biological role, receptor for lysophosphatidic acid (LPA). Plays a role in the reorganization of the actin cytoskeleton, cell migration, differentiation and proliferation, and thereby contributes to the responses to tissue damage and infectious agents. Activates downstream signaling cascades via the G(i)/G(o), G(12)/G(13), and G(q) families of heteromeric G proteins. Signaling inhibits adenylyl cyclase activity and decreases cellular cAMP levels. Signaling triggers an increase of cytoplasmic Ca(2+) levels. Signaling leads to the activation of phospholipase C (PLC) and the formation of inositol 1,4,5-trisphosphate. Signaling mediates activation of down-stream MAP kinases. Contributes to the regulation of cell shape. Promotes Rho-dependent reorganization of the actin cytoskeleton in neuronal cells and neurite retraction. Promotes the activation of Rho and the formation of actin stress fibers. Promotes formation of lamellipodia at the leading edge of migrating cells via activation of Rac. Through its function as lysophosphatidic acid receptor, plays a role in chemotaxis and cell migration, including responses to injury and wounding. Promotes cell proliferation in response to lysophosphatidic acid. In Xenopus laevis (African clawed frog), this protein is Lysophosphatidic acid receptor 1-A (lpar1-a).